We begin with the raw amino-acid sequence, 215 residues long: Nucleoside triphosphate pyrophosphatase (215 aa).

The protein belongs to the Maf family. Requires a divalent metal cation as cofactor.

Its subcellular location is the cytoplasm. The catalysed reaction is a ribonucleoside 5'-triphosphate + H2O = a ribonucleoside 5'-phosphate + diphosphate + H(+). The enzyme catalyses a 2'-deoxyribonucleoside 5'-triphosphate + H2O = a 2'-deoxyribonucleoside 5'-phosphate + diphosphate + H(+). In terms of biological role, nucleoside triphosphate pyrophosphatase. May have a dual role in cell division arrest and in preventing the incorporation of modified nucleotides into cellular nucleic acids. The polypeptide is Nucleoside triphosphate pyrophosphatase (Rickettsia conorii (strain ATCC VR-613 / Malish 7)).